Here is a 1634-residue protein sequence, read N- to C-terminus: MEKKTNKNKGVAEETKKKVAATTGFIIGQFIRFISIYYAPLYVALGRPHTITILALPYLLIHLFWNTDKSFFAYDSKKLNSIRNLEISSVFLNHFILQLLNSCILPNSTLARLITIYMFRCNNKILFLTSSFFAWFIGQIFMLNSFELVLVWIRKKNYLRSTFRNYLLRNSIFVILFNCLFGSLLFILSIQCLGRIPSPIPTQKLSEVSKIEQRERERLQSEEERDVEKKKPDYKLPDSESEILQKNESETPEFEKHLAALLFDYKRWTRPFRYIKNNRLEQALRNELSQYFFDTYQSDGKNRLSFTHPISLSTFLKMMKLKIPLLLVEKTLYNPLDNGWVSRNKKQMNYRRIYFLNRVNNLDKAVALPRIQFETTRTRLCIHNDETKQEYLPENYDPLLTGPHRGRIKRGLLTINDTLTINDTLSEHLRETIILNRLHALVLLNTNSKNFNQKMYTFEKKPLEISDFSTLSSNLNLTDPDQKTEFLVNPIETHDPNFIRKYIPIEEIRKNAPRWSYKLITELEQISYYKNPPEDHDIRSRKGISVVIFDPTKEAATTNSKTNTTKDTNLETKNKSKSDEKLVVIRYPQQSDFRQGLIKDSMRTQRRKIFLQELFNANVHSPLFFDRLRIVFSFPRLKQIFINLSARHVFGILKSTDKQTKRKRTKKEEKGENKRREQKERLEIGEAWDVFPLAQIIRGLLLLTQSFIRKKIILPSLILGKNIGRILLCQIPEWSEDLQEWNRETHIKCTYNGIPLSQKKFPENWLTEGIQIKILFPFCLKPWHAYKPRTSHYDFCFLTVWGRETEQPFGHPRKTPFFFEPVLQELDKKIVNIKARIFSKVKINLFKRVSKENDFQIRKQIMNESFRQIEEIPSCTNSSLIEKMRNMSDRTRTIKKKIERMTEDKKKVTLELYISTYKRSYRLALSKTICKMVKVLIWKFSYFQKLLNQRVYNDIFLYTIYICRMTTQLFLESTKKFISKSILKNERTKKRININKETKNKIHFLSKLKTSKNCKKNLDLSCDFSNLSQAYVFYKISQTGVLNICKLISVLQHTVISFFIQTQIKDLVHTEGIFKSEVIHQKLQWPKTSQWKNWLRLNSKYDLSPIFWFSLISQKQKWRNRVTKYHRPKEKYLNKWNSHGKYRLSDYKKQNVPKSVSNQKDNSKKCYQYDLLSYKSINYEKKSASVLYRSTPKVTKGQAIYHNDNMSQNYLFAITPNIPGKIKRVDIPYIGKNLDRKYLIWKNIHFSLRKKVDIESWVAVNTSSNKDSTIGNYNYQLIDQIDKKEKELFSLPIHQNTEINRPNSTNSLVDWMGMNEQILNRPITNLELWFFPEFVWLFNVYKTKPWIIPSKILLLNSNLSEIDSQQKSETDSETDSQQKNIAETQKYLEEDSTKSDTKKETELELELFTKKYFLFQLRGDQTFNKSFFKNIQIYCLLLRLRNRKKMTLSCIQRRKLNLRIMPSMTNLLNVPEFLKRTGLVMDPLPLSIKTDGKFLLYKIVGISLVHKSKDQTNKKYRKTRIIRAVENNHLDVLVLENILSSRCRRELRTLICFNYKNWNGVNTTSIFCSKNCNLFWEERNPRQNDKRELIQKFIWPNYRLEDLACMNRYSFDTTNGSRFSILRFHMYLPRKIHG.

A run of 5 helical transmembrane segments spans residues 25 to 45 (FIIG…YVAL), 53 to 73 (ILAL…SFFA), 94 to 116 (HFIL…LITI), 133 to 153 (FAWF…LVWI), and 172 to 192 (IFVI…SIQC). 2 disordered regions span residues 216-242 (RERL…SESE) and 1365-1395 (QQKS…STKS). Residues 1386 to 1395 (KYLEEDSTKS) are compositionally biased toward basic and acidic residues.

This sequence belongs to the TIC214 family. Part of the Tic complex.

Its subcellular location is the plastid. It localises to the chloroplast inner membrane. Functionally, involved in protein precursor import into chloroplasts. May be part of an intermediate translocation complex acting as a protein-conducting channel at the inner envelope. The protein is Protein TIC 214 of Cuscuta exaltata (Tall dodder).